We begin with the raw amino-acid sequence, 209 residues long: Large ribosomal subunit protein bL25 (209 aa).

Residues 183-209 (TAGERPAAEPAAAPGAAPAAGPEEAEE) are disordered. Residues 184–209 (AGERPAAEPAAAPGAAPAAGPEEAEE) are compositionally biased toward low complexity.

The protein belongs to the bacterial ribosomal protein bL25 family. CTC subfamily. Part of the 50S ribosomal subunit; part of the 5S rRNA/L5/L18/L25 subcomplex. Contacts the 5S rRNA. Binds to the 5S rRNA independently of L5 and L18.

In terms of biological role, this is one of the proteins that binds to the 5S RNA in the ribosome where it forms part of the central protuberance. The chain is Large ribosomal subunit protein bL25 from Pelotomaculum thermopropionicum (strain DSM 13744 / JCM 10971 / SI).